The following is a 673-amino-acid chain: B3 domain-containing protein Os01g0905400 (673 aa).

Basic and acidic residues predominate over residues 1 to 34; sequence MVELIKVPKIEQEEGNADSHGKEKADVVHEEKTE. Residues 1–44 are disordered; sequence MVELIKVPKIEQEEGNADSHGKEKADVVHEEKTEKVKRRRKRVS. A DNA-binding region (TF-B3 1) is located at residues 79–172; it reads LPSFFKIMVG…VFTVQIFAIS (94 aa). The segment at 315–337 is disordered; sequence PSFSYPESSNVMTADKESERSHQ. A compositionally biased stretch (basic and acidic residues) spans 328-337; sequence ADKESERSHQ. The segment at residues 576–671 is a DNA-binding region (TF-B3 2); that stretch reads SKKFCITIPP…ELSFQVLVPN (96 aa).

It localises to the nucleus. The protein is B3 domain-containing protein Os01g0905400 of Oryza sativa subsp. japonica (Rice).